A 67-amino-acid polypeptide reads, in one-letter code: Probable Sec-independent protein translocase protein TatE (67 aa).

The chain crosses the membrane as a helical span at residues 1–21 (MEGISIAKLLIIGALIVLLFG). The disordered stretch occupies residues 46–67 (EDTSATRTTAEDVPAERVVHKD).

It belongs to the TatA/E family. TatE subfamily.

Its subcellular location is the cell inner membrane. In terms of biological role, part of the twin-arginine translocation (Tat) system that transports large folded proteins containing a characteristic twin-arginine motif in their signal peptide across membranes. TatE shares overlapping functions with TatA. This is Probable Sec-independent protein translocase protein TatE from Pantoea vagans (strain C9-1) (Pantoea agglomerans (strain C9-1)).